A 430-amino-acid chain; its full sequence is Histidine--tRNA ligase (430 aa).

It belongs to the class-II aminoacyl-tRNA synthetase family. As to quaternary structure, homodimer.

The protein localises to the cytoplasm. The catalysed reaction is tRNA(His) + L-histidine + ATP = L-histidyl-tRNA(His) + AMP + diphosphate + H(+). This Anaplasma marginale (strain Florida) protein is Histidine--tRNA ligase.